A 406-amino-acid polypeptide reads, in one-letter code: Protrudin (406 aa).

The Cytoplasmic segment spans residues 1-71; that stretch reads MQAAERDGVA…AAEGVRALLR (71 aa). The sufficient for homooligomerization stretch occupies residues 1 to 97; sequence MQAAERDGVA…LLLTLDQAAW (97 aa). The interval 1–210 is sufficient for localization to endoplasmic reticulum tubular network; it reads MQAAERDGVA…LYLLPLCWVM (210 aa). Residues 72–92 form a helical membrane-spanning segment; the sequence is WQRPLCSLLVCLGLNFLLLTL. Residue Asp-93 is a topological domain, lumenal. The helical transmembrane segment at 94-114 threads the bilayer; sequence QAAWYSVLALLVLLPALLGYL. Residues 115–192 are Cytoplasmic-facing; sequence QETYRVRPSE…NPTVSSQFYG (78 aa). The helical intramembrane region spans 193 to 213; it reads ALLGSVCILYLLPLCWVMAIL. Residues 214–406 lie on the Cytoplasmic side of the membrane; that stretch reads NSTLFLGNSQ…CAQCNQMLIK (193 aa). The disordered stretch occupies residues 239–295; it reads LGTKPLESAPEPAKPLPTDAPPDRTPTPTSTEDLTPGSVEEAEEAEPDEEFKDAIEE. The segment covering 250-263 has biased composition (pro residues); the sequence is PAKPLPTDAPPDRT. Residues 278 to 295 are compositionally biased toward acidic residues; the sequence is EEAEEAEPDEEFKDAIEE. An FYVE-type zinc finger spans residues 339–405; the sequence is SNNFGTCTGC…VCAQCNQMLI (67 aa). Positions 345, 348, 361, 364, 369, 372, 397, and 400 each coordinate Zn(2+).

Can form homooligomers (monomers, dimers and tetramers).

The protein resides in the recycling endosome membrane. It localises to the endoplasmic reticulum membrane. The protein localises to the cell projection. It is found in the growth cone membrane. In terms of biological role, key regulator of RAB11-dependent vesicular trafficking during neurite extension through polarized membrane transport. Promotes axonal elongation and contributes to the establishment of neuronal cell polarity. Involved in nerve growth factor-induced neurite formation in VAPA-dependent manner. Contributes to both the formation and stabilization of the tubular ER network. Involved in ER morphogenesis by regulating the sheet-to-tubule balance and possibly the density of tubule interconnections. In Gallus gallus (Chicken), this protein is Protrudin (ZFYVE27).